The sequence spans 297 residues: 4-hydroxy-tetrahydrodipicolinate synthase (297 aa).

T50 provides a ligand contact to pyruvate. Catalysis depends on Y138, which acts as the Proton donor/acceptor. Catalysis depends on K166, which acts as the Schiff-base intermediate with substrate. I208 provides a ligand contact to pyruvate.

It belongs to the DapA family. As to quaternary structure, homotetramer; dimer of dimers.

It localises to the cytoplasm. The enzyme catalyses L-aspartate 4-semialdehyde + pyruvate = (2S,4S)-4-hydroxy-2,3,4,5-tetrahydrodipicolinate + H2O + H(+). The protein operates within amino-acid biosynthesis; L-lysine biosynthesis via DAP pathway; (S)-tetrahydrodipicolinate from L-aspartate: step 3/4. Catalyzes the condensation of (S)-aspartate-beta-semialdehyde [(S)-ASA] and pyruvate to 4-hydroxy-tetrahydrodipicolinate (HTPA). This is 4-hydroxy-tetrahydrodipicolinate synthase from Desulfotalea psychrophila (strain LSv54 / DSM 12343).